The sequence spans 508 residues: MGFQKSPDGGWGWVIVVVSFFTQFLCYGSPLAVGVLYVEWLDAFGEGKGKTAWVGSLASGVGLLASPVCSLFVSSFGARPVTIFSGFLVAGGLMLSSLAPNIYFLFFSYGIVVGLGCGLLYTATVTITCQYFDSRRGLALGLISTGSSVGLFIYAALQRMLIEFYGLDGCLLIVGALALNILACGSLMRPLQTSDCPFPEKIAPENVPDRYSIYNEKEKNQEETMTFQDKGYSNEDKCLPNGDWGRETSLPKNPTGAAHTKEPEPYKKKVVEQTNFCKQLAKRKWQVYRNYCGETASLFKNKVFSALFVAILLFDIGGFPPSLLMEDVARSYHVREEDLTIPLISIFGIMTAVGKLLLGILADFKWVNTLYLYVATLIITGLALCAIPLAKSYVTLAILSGILGFLTGNWSIFPYVTTKTVGIDKLAHAYGILMFFAGLGNSLGPPIVGWFYDWTQTYDIAFYFSGFCVLLGGFILLLAILPCWGMCNQRLPKPAAPTTFFYKVASNV.

6 helical membrane-spanning segments follow: residues 13–33, 53–73, 80–100, 102–122, 137–157, and 164–184; these read WVIV…PLAV, WVGS…SLFV, PVTI…SLAP, IYFL…LLYT, GLAL…YAAL, and FYGL…ILAC. The interval 242–263 is disordered; that stretch reads GDWGRETSLPKNPTGAAHTKEP. The next 6 membrane-spanning stretches (helical) occupy residues 303-323, 341-361, 370-390, 396-416, 431-451, and 460-480; these read VFSA…PPSL, IPLI…LGIL, LYLY…IPLA, LAIL…FPYV, GILM…VGWF, and IAFY…LLAI.

It belongs to the major facilitator superfamily. Monocarboxylate porter (TC 2.A.1.13) family. Expressed in the liver and kidneys. In the liver localizes on the sinusoidal membrane of the hepatocytes.

Its subcellular location is the cell membrane. It carries out the reaction creatine(in) = creatine(out). It catalyses the reaction (R)-carnitine(in) = (R)-carnitine(out). In terms of biological role, extracellular pH-and Na(+)-sensitive low-affinity creatine transporter. Also functions as a pH-independent carnitine efflux transporter. This Rattus norvegicus (Rat) protein is Monocarboxylate transporter 9 (Slc16a9).